We begin with the raw amino-acid sequence, 455 residues long: Bifunctional protein GlmU (455 aa).

The segment at 1-226 is pyrophosphorylase; the sequence is MSLDIVILAA…PMEVQGANDR (226 aa). Residues 8–11, K22, Q73, 78–79, 99–101, G136, E151, N166, and N224 contribute to the UDP-N-acetyl-alpha-D-glucosamine site; these read LAAG, GT, and YGD. D101 serves as a coordination point for Mg(2+). Mg(2+) is bound at residue N224. Residues 227–247 form a linker region; that stretch reads RQLSELERHYQLREGRRLMAQ. The N-acetyltransferase stretch occupies residues 248-455; the sequence is GVTLRDPARF…WKRPEKTKKS (208 aa). The UDP-N-acetyl-alpha-D-glucosamine site is built by R330 and K348. H360 (proton acceptor) is an active-site residue. Residues Y363 and N374 each contribute to the UDP-N-acetyl-alpha-D-glucosamine site. Residues A377, 383–384, S402, A420, and R437 contribute to the acetyl-CoA site; that span reads NY.

The protein in the N-terminal section; belongs to the N-acetylglucosamine-1-phosphate uridyltransferase family. This sequence in the C-terminal section; belongs to the transferase hexapeptide repeat family. In terms of assembly, homotrimer. It depends on Mg(2+) as a cofactor.

The protein localises to the cytoplasm. The enzyme catalyses alpha-D-glucosamine 1-phosphate + acetyl-CoA = N-acetyl-alpha-D-glucosamine 1-phosphate + CoA + H(+). It catalyses the reaction N-acetyl-alpha-D-glucosamine 1-phosphate + UTP + H(+) = UDP-N-acetyl-alpha-D-glucosamine + diphosphate. Its pathway is nucleotide-sugar biosynthesis; UDP-N-acetyl-alpha-D-glucosamine biosynthesis; N-acetyl-alpha-D-glucosamine 1-phosphate from alpha-D-glucosamine 6-phosphate (route II): step 2/2. It functions in the pathway nucleotide-sugar biosynthesis; UDP-N-acetyl-alpha-D-glucosamine biosynthesis; UDP-N-acetyl-alpha-D-glucosamine from N-acetyl-alpha-D-glucosamine 1-phosphate: step 1/1. It participates in bacterial outer membrane biogenesis; LPS lipid A biosynthesis. Functionally, catalyzes the last two sequential reactions in the de novo biosynthetic pathway for UDP-N-acetylglucosamine (UDP-GlcNAc). The C-terminal domain catalyzes the transfer of acetyl group from acetyl coenzyme A to glucosamine-1-phosphate (GlcN-1-P) to produce N-acetylglucosamine-1-phosphate (GlcNAc-1-P), which is converted into UDP-GlcNAc by the transfer of uridine 5-monophosphate (from uridine 5-triphosphate), a reaction catalyzed by the N-terminal domain. In Pseudomonas putida (strain GB-1), this protein is Bifunctional protein GlmU.